The sequence spans 196 residues: Vacuolar iron transporter homolog 2 (196 aa).

At 1–31 (MDQSGSNTNMDIEKESTTFDYSKRSQWLRAA) the chain is on the cytoplasmic side. The chain crosses the membrane as a helical span at residues 32–52 (VLGANDGLVSTASLMMGVGAV). Over 53 to 59 (KHDVKAM) the chain is Vacuolar. Residues 60–80 (ILSGFAGMVAGACSMAIGEFV) traverse the membrane as a helical segment. The Cytoplasmic portion of the chain corresponds to 81–112 (SVYSQYDIEVAQMERDSVEIEKEKLPSPMQAA). The chain crosses the membrane as a helical span at residues 113–133 (AASALAFSAGAIVPLLAAAFV). Topologically, residues 134–139 (KEYKMR) are vacuolar. The chain crosses the membrane as a helical span at residues 140 to 160 (IISVVVAVTVALMVFGWLGAA). The Cytoplasmic portion of the chain corresponds to 161–172 (LGKAPAVRSSAR). The chain crosses the membrane as a helical span at residues 173–193 (VLFGGWLAMAVTFGLTKLIGL). Topologically, residues 194 to 196 (YGL) are vacuolar.

It belongs to the CCC1 family. As to expression, expressed in roots, leaves and inflorescences.

It localises to the vacuole membrane. The enzyme catalyses Fe(2+)(in) = Fe(2+)(out). Functionally, vacuolar iron transporter involved in the transfer of iron ions from the cytosol to the vacuole for intracellular iron storage. Involved in regulation of cellular iron homeostasis. Vacuolar iron storage is required for seed embryo and seedling development. The polypeptide is Vacuolar iron transporter homolog 2 (Arabidopsis thaliana (Mouse-ear cress)).